Consider the following 507-residue polypeptide: Cuticlin-4 (507 aa).

Residues 1–19 (MFHFTRILAAFLLPTLCFC) form the signal peptide. Residues 20-471 (GYSTAPSSTV…KTCFSTSRMY (452 aa)) lie on the Extracellular side of the membrane. Residues 42-280 (VCETASISLL…YGCSNTQPQC (239 aa)) form the ZP domain. The disordered stretch occupies residues 292–350 (KTTETAEPYPYDSHESGYPTRPANYPVASSRYPIPTTQAPASYPSSPAPPPPGADIDNG). Asn-374 and Asn-408 each carry an N-linked (GlcNAc...) asparagine glycan. Residues 472–492 (FTLILLCLLFATTVVVFIVIV) form a helical membrane-spanning segment. Over 493–507 (QKQRQILAQTAFFKP) the chain is Cytoplasmic.

It localises to the cell membrane. Its function is as follows. Plays a role in alae formation and subsequent cuticle attachment in adults. This is Cuticlin-4 from Caenorhabditis elegans.